A 141-amino-acid chain; its full sequence is Large ribosomal subunit protein uL16c (141 aa).

Positions 1-17 are enriched in basic residues; the sequence is MLSPKRTKYRKPHRGNR. A disordered region spans residues 1–21; the sequence is MLSPKRTKYRKPHRGNRKGQA.

It belongs to the universal ribosomal protein uL16 family. As to quaternary structure, part of the 50S ribosomal subunit.

The protein localises to the plastid. It localises to the chloroplast. In Ostreococcus tauri, this protein is Large ribosomal subunit protein uL16c.